Reading from the N-terminus, the 131-residue chain is Classical arabinogalactan protein 1 (131 aa).

The signal sequence occupies residues 1–22 (MAFSKSLVFVLLAALLISSAVA). A disordered region spans residues 22–110 (AQSPAPAPSN…APGPAQGGAV (89 aa)). The span at 50 to 60 (APAPEVSPSPS) shows a compositional bias: pro residues. A compositionally biased stretch (low complexity) spans 61 to 72 (PAAALTPESSAS). Gly108 carries GPI-anchor amidated glycine lipidation. The propeptide at 109–131 (AVSNKFASFGSVAVMLTAAVLVI) is removed in mature form.

The protein belongs to the classical AGP family. Post-translationally, O-glycosylated on the hydroxyproline residues. Predominantly expressed in flowers and at a lower level in roots and leaves.

The protein resides in the cell membrane. Proteoglycan that seems to be implicated in diverse developmental roles such as differentiation, cell-cell recognition, embryogenesis and programmed cell death. This chain is Classical arabinogalactan protein 1 (AGP1), found in Arabidopsis thaliana (Mouse-ear cress).